The primary structure comprises 430 residues: tRNA(Ile)-lysidine synthase (430 aa).

27 to 32 (SGGSDS) contributes to the ATP binding site.

The protein belongs to the tRNA(Ile)-lysidine synthase family.

Its subcellular location is the cytoplasm. The catalysed reaction is cytidine(34) in tRNA(Ile2) + L-lysine + ATP = lysidine(34) in tRNA(Ile2) + AMP + diphosphate + H(+). Functionally, ligates lysine onto the cytidine present at position 34 of the AUA codon-specific tRNA(Ile) that contains the anticodon CAU, in an ATP-dependent manner. Cytidine is converted to lysidine, thus changing the amino acid specificity of the tRNA from methionine to isoleucine. The protein is tRNA(Ile)-lysidine synthase of Rickettsia bellii (strain RML369-C).